Reading from the N-terminus, the 109-residue chain is Thiosulfate sulfurtransferase GlpE (109 aa).

The Rhodanese domain maps to 16 to 104 (REQGAVVVDV…WRTTFPSETA (89 aa)). Residue C64 is the Cysteine persulfide intermediate of the active site.

This sequence belongs to the GlpE family.

The protein localises to the cytoplasm. The catalysed reaction is thiosulfate + hydrogen cyanide = thiocyanate + sulfite + 2 H(+). It catalyses the reaction thiosulfate + [thioredoxin]-dithiol = [thioredoxin]-disulfide + hydrogen sulfide + sulfite + 2 H(+). In terms of biological role, transferase that catalyzes the transfer of sulfur from thiosulfate to thiophilic acceptors such as cyanide or dithiols. May function in a CysM-independent thiosulfate assimilation pathway by catalyzing the conversion of thiosulfate to sulfite, which can then be used for L-cysteine biosynthesis. In Pseudomonas fluorescens (strain Pf0-1), this protein is Thiosulfate sulfurtransferase GlpE.